The chain runs to 101 residues: Unclassified hydrophobin dewD (101 aa).

The signal sequence occupies residues 1–21; the sequence is MHLSTSAAAILALSLAGPTMA. 4 disulfide bridges follow: C27/C81, C41/C73, C42/C60, and C82/C91.

Self-assembles to form functional amyloid fibrils called rodlets. Self-assembly into fibrillar rodlets occurs spontaneously at hydrophobic:hydrophilic interfaces and the rodlets further associate laterally to form amphipathic monolayers.

The protein localises to the secreted. It localises to the spore wall. In terms of biological role, aerial growth, conidiation, and dispersal of filamentous fungi in the environment rely upon a capability of their secreting small amphipathic proteins called hydrophobins (HPBs) with low sequence identity. Class I can self-assemble into an outermost layer of rodlet bundles on aerial cell surfaces, conferring cellular hydrophobicity that supports fungal growth, development and dispersal; whereas Class II form highly ordered films at water-air interfaces through intermolecular interactions but contribute nothing to the rodlet structure. DewD is an unclassified hydrophobin that contributes to the hydrophobicity of the spore surface. This chain is Unclassified hydrophobin dewD, found in Emericella nidulans (strain FGSC A4 / ATCC 38163 / CBS 112.46 / NRRL 194 / M139) (Aspergillus nidulans).